Here is a 238-residue protein sequence, read N- to C-terminus: Flagellar L-ring protein (238 aa).

Positions 1 to 17 are cleaved as a signal peptide; that stretch reads MKRRLLAAGCAMLLLSG. Cys18 is lipidated: N-palmitoyl cysteine. A lipid anchor (S-diacylglycerol cysteine) is attached at Cys18. The segment at 22–50 is disordered; sequence RQQPSPVPPVTQPQAYAEPEDTAANPGSL.

Belongs to the FlgH family. In terms of assembly, the basal body constitutes a major portion of the flagellar organelle and consists of four rings (L,P,S, and M) mounted on a central rod.

It localises to the cell outer membrane. The protein resides in the bacterial flagellum basal body. Its function is as follows. Assembles around the rod to form the L-ring and probably protects the motor/basal body from shearing forces during rotation. The protein is Flagellar L-ring protein of Nitratidesulfovibrio vulgaris (strain DSM 19637 / Miyazaki F) (Desulfovibrio vulgaris).